The following is a 630-amino-acid chain: Neuronal acetylcholine receptor subunit alpha-4 (630 aa).

Residues 1-30 (MANSGTGAPPPLLLLPLLLLLGTGLLPASS) form the signal peptide. Topologically, residues 32 to 249 (IETRAHAEER…IIRRLPLFYT (218 aa)) are extracellular. The N-linked (GlcNAc...) asparagine glycan is linked to Asn59. Residues Val78 and Glu80 each coordinate Ca(2+). 2 N-linked (GlcNAc...) asparagine glycosylation sites follow: Asn109 and Asn176. 2 cysteine pairs are disulfide-bonded: Cys163–Cys177 and Cys227–Cys228. The chain crosses the membrane as a helical span at residues 250–270 (INLIIPCLLISCLTVLVFYLP). Cys273 carries the S-palmitoyl cysteine lipid modification. Transmembrane regions (helical) follow at residues 279 to 299 (LCISVLLSLTVFLLLITEIIP) and 313 to 333 (LLFTMIFVTLSIVITVFVLNV). Residues 334–604 (HHRSPRTHTM…WKYVAMVIDR (271 aa)) are Cytoplasmic-facing. Disordered stretches follow at residues 418 to 463 (TAVE…SGAP) and 505 to 526 (SLADSKPTSSPTSLKARPSQLP). The residue at position 428 (Ser428) is a Phosphoserine. Basic and acidic residues predominate over residues 434–443 (PDLKTSEVEK). The segment covering 447–457 (CPSPGSCPPPK) has biased composition (pro residues). Phosphoserine occurs at positions 542 and 545. A helical membrane pass occupies residues 605–625 (IFLWMFIIVCLLGTVGLFLPP).

The protein belongs to the ligand-gated ion channel (TC 1.A.9) family. Acetylcholine receptor (TC 1.A.9.1) subfamily. Alpha-4/CHRNA4 sub-subfamily. Neuronal AChR is composed of two different types of subunits: alpha and beta. CHRNA4 forms heteropentameric neuronal acetylcholine receptors with CHRNB2 and CHRNB4, as well as CHRNA5 and CHRNB3 as accesory subunits. Found in two major stoichiometric forms, LS (low agonist sensitivity): (CHRNA4)3:(CHRNB2)2 and HS (high agonist sensitivity): (CHRNA4)2:(CHRNB2)3, the two stoichiometric forms differ in their unitary conductance, calcium permeability, ACh sensitivity and potentiation by divalent cation. Cells produce predominantly an (CHRNA4)3:(CHRNB2)2 nAChR. The (CHRNA4)2:(CHRNB2)3 expression is selectively up-regulated by nicotine and has lower single channel conductance and calcium permeability. In the striatum, also forms CHRNA4:CHRNA6:CHRNB2 complexes. Also found in the stoichiometric form: (CHRNA4:CHRNB2)2:CHRNB3. Interacts with RIC3; which is required for proper folding and assembly. Interacts with LYPD6. In terms of tissue distribution, in various regions of the central nervous system. Expressed in hippocampal neurons.

It localises to the presynaptic cell membrane. The protein localises to the cell membrane. It carries out the reaction Ca(2+)(in) = Ca(2+)(out). The enzyme catalyses K(+)(in) = K(+)(out). It catalyses the reaction Na(+)(in) = Na(+)(out). With respect to regulation, activated by a myriad of ligands such as acetylcholine, cytisine, nicotine, choline and epibatidine. Channel potentiation by calcium is stoichiometry-selective, CHRNA4:CHRNB2 nACh receptor is achieved by calcium association with topographically distinct sites framed by anionic residues within the CHRNA4 subunit and between the CHRNA4 and CHRNB2 subunits. nAChR activity is inhibited by the antagonist alpha-conotoxins BuIA, PnIA, GID and MII, small disulfide-constrained peptides from cone snails. In terms of biological role, component of neuronal acetylcholine receptors (nAChRs) that function as pentameric, ligand-gated cation channels with high calcium permeability among other activities. nAChRs are excitatory neurotrasnmitter receptors formed by a collection of nAChR subunits known to mediate synaptic transmission in the nervous system and the neuromuscular junction. Each nAchR subunit confers differential attributes to channel properties, including activation, deactivation and desensitization kinetics, pH sensitivity, cation permeability, and binding to allosteric modulators. CHRNA4 forms heteropentameric neuronal acetylcholine receptors with CHRNB2 and CHRNB4, as well as CHRNA5 and CHRNB3 as accesory subunits. Is the most abundant nAChR subtype expressed in the central nervous system. Found in two major stoichiometric forms,(CHRNA4)3:(CHRNB2)2 and (CHRNA4)2:(CHRNB2)3, the two stoichiometric forms differ in their unitary conductance, calcium permeability, ACh sensitivity and potentiation by divalent cation. Involved in the modulation of calcium-dependent signaling pathways, influences the release of neurotransmitters, including dopamine, glutamate and GABA. The polypeptide is Neuronal acetylcholine receptor subunit alpha-4 (Chrna4) (Rattus norvegicus (Rat)).